A 295-amino-acid polypeptide reads, in one-letter code: Putative S-adenosyl-L-methionine-dependent methyltransferase Mvan_0910 (295 aa).

S-adenosyl-L-methionine is bound by residues aspartate 126 and 155 to 156 (DL).

Belongs to the UPF0677 family.

In terms of biological role, exhibits S-adenosyl-L-methionine-dependent methyltransferase activity. This Mycolicibacterium vanbaalenii (strain DSM 7251 / JCM 13017 / BCRC 16820 / KCTC 9966 / NRRL B-24157 / PYR-1) (Mycobacterium vanbaalenii) protein is Putative S-adenosyl-L-methionine-dependent methyltransferase Mvan_0910.